A 503-amino-acid polypeptide reads, in one-letter code: Cytochrome P450 3A8 (503 aa).

Cysteine 442 provides a ligand contact to heme.

Belongs to the cytochrome P450 family. Heme serves as cofactor.

It localises to the endoplasmic reticulum membrane. The protein resides in the microsome membrane. It catalyses the reaction an organic molecule + reduced [NADPH--hemoprotein reductase] + O2 = an alcohol + oxidized [NADPH--hemoprotein reductase] + H2O + H(+). Catalyzes nifedipine and nilvadipine oxidations. The polypeptide is Cytochrome P450 3A8 (CYP3A8) (Macaca fascicularis (Crab-eating macaque)).